Reading from the N-terminus, the 413-residue chain is Hibernation-specific plasma protein HP-55 (413 aa).

The first 24 residues, 1-24, serve as a signal peptide directing secretion; sequence MPSSISWGLLLLAALSCLGPGSLA. Glutamine 25 carries the post-translational modification Pyrrolidone carboxylic acid. 4 N-linked (GlcNAc...) asparagine glycosylation sites follow: asparagine 65, asparagine 102, asparagine 165, and asparagine 266. The interval 368–387 is RCL; that stretch reads GGTVLGAEAMLQAPIMKFDR.

Belongs to the serpin family. As to quaternary structure, plasma proteins HP-20, HP-25, HP-27 and HP-55 form a 140 kDa complex via disulfide bonds in the plasma. Post-translationally, the N-terminus is blocked. In terms of tissue distribution, plasma; synthesized in the liver.

The protein resides in the secreted. Its function is as follows. Protease inhibitor. The sequence is that of Hibernation-specific plasma protein HP-55 from Tamias sibiricus (Siberian chipmunk).